Reading from the N-terminus, the 121-residue chain is Fluoride-specific ion channel FluC 2 (121 aa).

A run of 4 helical transmembrane segments spans residues Y3–I23, I31–A51, G64–V84, and F92–L112. 2 residues coordinate Na(+): G71 and T74.

Belongs to the fluoride channel Fluc/FEX (TC 1.A.43) family.

The protein resides in the cell membrane. It carries out the reaction fluoride(in) = fluoride(out). Its activity is regulated as follows. Na(+) is not transported, but it plays an essential structural role and its presence is essential for fluoride channel function. Functionally, fluoride-specific ion channel. Important for reducing fluoride concentration in the cell, thus reducing its toxicity. The sequence is that of Fluoride-specific ion channel FluC 2 from Staphylococcus saprophyticus subsp. saprophyticus (strain ATCC 15305 / DSM 20229 / NCIMB 8711 / NCTC 7292 / S-41).